The sequence spans 220 residues: 1-Cys peroxiredoxin B (220 aa).

The region spanning 4–165 is the Thioredoxin domain; the sequence is LTLGDVVPDL…VLRATDALLT (162 aa). The active-site Cysteine sulfenic acid (-SOH) intermediate is Cys-46. Residues 195–218 carry the Bipartite nuclear localization signal motif; sequence KARFPAGFETAQLPSNKCYLRFTQ.

The protein belongs to the peroxiredoxin family. Prx6 subfamily.

It is found in the nucleus. Its subcellular location is the cytoplasm. It carries out the reaction a hydroperoxide + [thioredoxin]-dithiol = an alcohol + [thioredoxin]-disulfide + H2O. Its function is as follows. Thiol-specific peroxidase that catalyzes the reduction of hydrogen peroxide and organic hydroperoxides to water and alcohols, respectively. Seems to contribute to the inhibition of germination during stress. This chain is 1-Cys peroxiredoxin B, found in Oryza sativa subsp. japonica (Rice).